A 226-amino-acid polypeptide reads, in one-letter code: ADP-ribosylation factor-like protein 6-interacting protein 6 (226 aa).

Residues 1 to 48 are disordered; it reads MSFAESGWRSALRRRGPGTPGPVARPSYSSFTQGDSWGEGEVDEEEGC. A phosphoserine mark is found at S2 and S36. The segment covering 38–48 has biased composition (acidic residues); the sequence is GEGEVDEEEGC. 3 positions are modified to phosphoserine: S60, S65, and S80. The disordered stretch occupies residues 66 to 85; sequence EPRKRSVLPPDGNGSPVLPD. Transmembrane regions (helical) follow at residues 111 to 131, 150 to 170, and 205 to 225; these read ILCS…AYLI, LLGF…CCSF, and MGYS…AWCL.

The protein belongs to the ARL6IP6 family.

It is found in the nucleus inner membrane. This is ADP-ribosylation factor-like protein 6-interacting protein 6 (ARL6IP6) from Homo sapiens (Human).